We begin with the raw amino-acid sequence, 357 residues long: Fructose-bisphosphate aldolase (357 aa).

The substrate site is built by arginine 49 and lysine 140. Glutamate 183 functions as the Proton acceptor in the catalytic mechanism. Lysine 225 acts as the Schiff-base intermediate with dihydroxyacetone-P in catalysis.

The protein belongs to the class I fructose-bisphosphate aldolase family.

The enzyme catalyses beta-D-fructose 1,6-bisphosphate = D-glyceraldehyde 3-phosphate + dihydroxyacetone phosphate. The protein operates within carbohydrate degradation; glycolysis; D-glyceraldehyde 3-phosphate and glycerone phosphate from D-glucose: step 4/4. The protein is Fructose-bisphosphate aldolase (fba) of Dictyostelium discoideum (Social amoeba).